The chain runs to 383 residues: Queuine tRNA-ribosyltransferase (383 aa).

The active-site Proton acceptor is the Asp90. Residues Asp90–Phe94, Asp144, Gln193, and Gly227 contribute to the substrate site. Residues Gly258–Asp264 form an RNA binding region. The active-site Nucleophile is Asp277. Residues Thr282–Arg286 form an RNA binding; important for wobble base 34 recognition region. 4 residues coordinate Zn(2+): Cys315, Cys317, Cys320, and His346.

This sequence belongs to the queuine tRNA-ribosyltransferase family. As to quaternary structure, homodimer. Within each dimer, one monomer is responsible for RNA recognition and catalysis, while the other monomer binds to the replacement base PreQ1. Requires Zn(2+) as cofactor.

The catalysed reaction is 7-aminomethyl-7-carbaguanine + guanosine(34) in tRNA = 7-aminomethyl-7-carbaguanosine(34) in tRNA + guanine. It participates in tRNA modification; tRNA-queuosine biosynthesis. Catalyzes the base-exchange of a guanine (G) residue with the queuine precursor 7-aminomethyl-7-deazaguanine (PreQ1) at position 34 (anticodon wobble position) in tRNAs with GU(N) anticodons (tRNA-Asp, -Asn, -His and -Tyr). Catalysis occurs through a double-displacement mechanism. The nucleophile active site attacks the C1' of nucleotide 34 to detach the guanine base from the RNA, forming a covalent enzyme-RNA intermediate. The proton acceptor active site deprotonates the incoming PreQ1, allowing a nucleophilic attack on the C1' of the ribose to form the product. After dissociation, two additional enzymatic reactions on the tRNA convert PreQ1 to queuine (Q), resulting in the hypermodified nucleoside queuosine (7-(((4,5-cis-dihydroxy-2-cyclopenten-1-yl)amino)methyl)-7-deazaguanosine). The sequence is that of Queuine tRNA-ribosyltransferase from Ralstonia nicotianae (strain ATCC BAA-1114 / GMI1000) (Ralstonia solanacearum).